The following is a 447-amino-acid chain: MNAYEANFDGLVGPTHNYGGLAVGNIASAESALTNSNPREAALQGLEKMKRLADLGLMQGVLPPQERPAVSVLRKLGFTGEDATIIRCAAKVAPGLLRACSSASSMWVANAATVSPSADTEDGKVHLTAANLPSQFHRSIEAPVTSAVLKRVFSNERYFVHHDPLPSNLYFGDEGAANHMRLCPRHGEPGVEIFVFGRSASRDIPKPLRFPARQSLEASEAVARLHQIKRGKELFVQQGPAAIDAGAFHNDVLAVANCDVLFYHEAAYRDWEETEARITKACDWPIHFIRTGEEDVTLAEAVRTYLFNAQLLTLPGNEMMILAPSECRDSHSARNFLERVVQDAANPIAHVEYVDLRQSMKNGGGPACLRLRVVLTEPELDAVQENSRVILDECLYNDLKAWIEKHYRECLSPTDLGDPALLQESRAALDELTTILGFGSLYDFQRP.

Residues 19 to 28 (GGLAVGNIAS), N110, and 137 to 138 (HR) contribute to the substrate site. Residue E174 is part of the active site. R213 is a binding site for substrate. The active site involves H249. Positions 251 and 362 each coordinate substrate. The Nucleophile role is filled by C368.

Belongs to the succinylarginine dihydrolase family. Homodimer.

It catalyses the reaction N(2)-succinyl-L-arginine + 2 H2O + 2 H(+) = N(2)-succinyl-L-ornithine + 2 NH4(+) + CO2. It participates in amino-acid degradation; L-arginine degradation via AST pathway; L-glutamate and succinate from L-arginine: step 2/5. Its function is as follows. Catalyzes the hydrolysis of N(2)-succinylarginine into N(2)-succinylornithine, ammonia and CO(2). This Nitrosospira multiformis (strain ATCC 25196 / NCIMB 11849 / C 71) protein is N-succinylarginine dihydrolase.